The primary structure comprises 91 residues: MGRSLKKGPFIADSLIKKVEKQNSDDDKSVIKTWSRASTILPMMIGHTIAVHNGKTHVPVFITEQMVGHKLGEFAPTRTYRGHMKDKKGGR.

This sequence belongs to the universal ribosomal protein uS19 family.

Protein S19 forms a complex with S13 that binds strongly to the 16S ribosomal RNA. This chain is Small ribosomal subunit protein uS19, found in Prochlorococcus marinus (strain SARG / CCMP1375 / SS120).